A 131-amino-acid polypeptide reads, in one-letter code: Small ribosomal subunit protein eS24 (131 aa).

Position 1 is an N-acetylmethionine (Met1). Thr9 carries the phosphothreonine modification. Residue Lys37 forms a Glycyl lysine isopeptide (Lys-Gly) (interchain with G-Cter in SUMO2) linkage. The span at 90-100 shows a compositional bias: basic and acidic residues; it reads RLARHGLYEKK. Residues 90 to 131 are disordered; it reads RLARHGLYEKKKTSRKQRKERKNRMKKVRGTAKANVGAGKKK. A compositionally biased stretch (basic residues) spans 101-119; that stretch reads KTSRKQRKERKNRMKKVRG.

It belongs to the eukaryotic ribosomal protein eS24 family. Component of the small ribosomal subunit. Part of the small subunit (SSU) processome, composed of more than 70 proteins and the RNA chaperone small nucleolar RNA (snoRNA) U3.

The protein localises to the cytoplasm. Its subcellular location is the nucleus. It is found in the nucleolus. Its function is as follows. Component of the small ribosomal subunit. The ribosome is a large ribonucleoprotein complex responsible for the synthesis of proteins in the cell. Required for processing of pre-rRNA and maturation of 40S ribosomal subunits. Part of the small subunit (SSU) processome, first precursor of the small eukaryotic ribosomal subunit. During the assembly of the SSU processome in the nucleolus, many ribosome biogenesis factors, an RNA chaperone and ribosomal proteins associate with the nascent pre-rRNA and work in concert to generate RNA folding, modifications, rearrangements and cleavage as well as targeted degradation of pre-ribosomal RNA by the RNA exosome. This is Small ribosomal subunit protein eS24 (RPS24) from Macaca fascicularis (Crab-eating macaque).